Here is a 226-residue protein sequence, read N- to C-terminus: ATP synthase subunit a (226 aa).

The next 6 helical transmembrane spans lie at 22-42 (SMNW…FWLI), 73-93 (IIIF…SLIP), 102-122 (LLLN…YLIY), 135-155 (LNSP…SLII), 173-193 (LILT…PINL), and 202-222 (LEIF…ILYF).

This sequence belongs to the ATPase A chain family. As to quaternary structure, F-type ATPases have 2 components, CF(1) - the catalytic core - and CF(0) - the membrane proton channel. CF(1) has five subunits: alpha(3), beta(3), gamma(1), delta(1), epsilon(1). CF(0) has three main subunits: a, b and c.

The protein resides in the mitochondrion inner membrane. Mitochondrial membrane ATP synthase (F(1)F(0) ATP synthase or Complex V) produces ATP from ADP in the presence of a proton gradient across the membrane which is generated by electron transport complexes of the respiratory chain. F-type ATPases consist of two structural domains, F(1) - containing the extramembraneous catalytic core and F(0) - containing the membrane proton channel, linked together by a central stalk and a peripheral stalk. During catalysis, ATP synthesis in the catalytic domain of F(1) is coupled via a rotary mechanism of the central stalk subunits to proton translocation. Key component of the proton channel; it may play a direct role in the translocation of protons across the membrane. The chain is ATP synthase subunit a (ATP6) from Apis mellifera ligustica (Common honeybee).